The primary structure comprises 262 residues: MSSGLYSMEKKEFDKVLDLERVKPYGDTMNDGKVQLSFTLPLKNNERSAEAAKQIALKMGLEEPSVVMQQSLDEEFTFFVVYGNFVQSVNYNEIHVEAVNSEILSMEETDEYIKENIGRKIVVVGASTGTDAHTVGIDAIMNMKGYAGHYGLERYEMIDAYNLGSQVANEDFIKKAVELEADVLLVSQTVTQKNVHIQNMTHLIELLEAEGLRDRFVLLCGGPRINNEIAKELGYDAGFGPGRFADDVATFAVKTLNDRMNS.

Residues 120-262 form the B12-binding domain; it reads KIVVVGASTG…VKTLNDRMNS (143 aa). Residues 130–136 and H133 each bind adenosylcob(III)alamin; that span reads TDAHTVG. N6-(pyridoxal phosphate)lysine is present on K144. Residues 185–192, 219–223, and 239–244 contribute to the adenosylcob(III)alamin site; these read LVSQTVTQ, LCGGP, and FGPGRF.

Belongs to the KamE family. Heterotetramer of 2 alpha and 2 beta subunits. It depends on adenosylcob(III)alamin as a cofactor. Pyridoxal 5'-phosphate serves as cofactor.

It carries out the reaction (3S)-3,6-diaminohexanoate = (3S,5S)-3,5-diaminohexanoate. The catalysed reaction is D-lysine = (2R,5S)-2,5-diaminohexanoate. Its pathway is amino-acid metabolism; lysine degradation. Rapidly inactivated in the presence of D-lysine and to a lesser extent in the absence of adenosylcobalamin (Adocbl). Activity is stable in the presence of Adocbl when D-lysine is absent. Adocbl imparts thermal stability at 37 degrees Celsius. Its function is as follows. Catalyzes the migration of the L-beta-lysine and D-lysine epsilon amino group to the delta carbon to produce 3,5-diaminohexanoate and 2,5-diaminohexanoate, respectively. The chain is Lysine 5,6-aminomutase beta subunit (kamE) from Acetoanaerobium sticklandii (strain ATCC 12662 / DSM 519 / JCM 1433 / CCUG 9281 / NCIMB 10654 / HF) (Clostridium sticklandii).